Here is a 161-residue protein sequence, read N- to C-terminus: Negative cofactor 2 complex subunit beta (161 aa).

A Histone-fold domain is found at 11–75 (SLPKATVQKM…IAAEHIIKAL (65 aa)). Residues 93-107 (EHKEQQKNREKKSSK) are compositionally biased toward basic and acidic residues. Disordered regions lie at residues 93–116 (EHKE…VSRD) and 130–161 (RERF…TKEN). The span at 135–147 (NQNIAHDNHTTTA) shows a compositional bias: polar residues.

Belongs to the NC2 beta/DR1 family.

The protein resides in the cytoplasm. Its subcellular location is the nucleus. In Schizosaccharomyces pombe (strain 972 / ATCC 24843) (Fission yeast), this protein is Negative cofactor 2 complex subunit beta (ncb2).